Reading from the N-terminus, the 157-residue chain is Crossover junction endodeoxyribonuclease RuvC (157 aa).

Residues aspartate 7, glutamate 66, and aspartate 139 contribute to the active site. Positions 7, 66, and 139 each coordinate Mg(2+).

This sequence belongs to the RuvC family. In terms of assembly, homodimer which binds Holliday junction (HJ) DNA. The HJ becomes 2-fold symmetrical on binding to RuvC with unstacked arms; it has a different conformation from HJ DNA in complex with RuvA. In the full resolvosome a probable DNA-RuvA(4)-RuvB(12)-RuvC(2) complex forms which resolves the HJ. It depends on Mg(2+) as a cofactor.

It is found in the cytoplasm. It catalyses the reaction Endonucleolytic cleavage at a junction such as a reciprocal single-stranded crossover between two homologous DNA duplexes (Holliday junction).. In terms of biological role, the RuvA-RuvB-RuvC complex processes Holliday junction (HJ) DNA during genetic recombination and DNA repair. Endonuclease that resolves HJ intermediates. Cleaves cruciform DNA by making single-stranded nicks across the HJ at symmetrical positions within the homologous arms, yielding a 5'-phosphate and a 3'-hydroxyl group; requires a central core of homology in the junction. The consensus cleavage sequence is 5'-(A/T)TT(C/G)-3'. Cleavage occurs on the 3'-side of the TT dinucleotide at the point of strand exchange. HJ branch migration catalyzed by RuvA-RuvB allows RuvC to scan DNA until it finds its consensus sequence, where it cleaves and resolves the cruciform DNA. The polypeptide is Crossover junction endodeoxyribonuclease RuvC (Campylobacter concisus (strain 13826)).